A 178-amino-acid chain; its full sequence is Sec-independent protein translocase protein TatB (178 aa).

Residues 1-21 (MFDIGWSELVVIAVVALIAIG) traverse the membrane as a helical segment. The segment covering 77–86 (TSGNLMTKLT) has biased composition (polar residues). Residues 77 to 178 (TSGNLMTKLT…HEAVKDAKAS (102 aa)) form a disordered region. A compositionally biased stretch (basic and acidic residues) spans 93-102 (PKLEDLDKPA). Residues 155-165 (HATPEPAPATH) show a composition bias toward low complexity. The segment covering 166-178 (ETPHEAVKDAKAS) has biased composition (basic and acidic residues).

This sequence belongs to the TatB family. In terms of assembly, the Tat system comprises two distinct complexes: a TatABC complex, containing multiple copies of TatA, TatB and TatC subunits, and a separate TatA complex, containing only TatA subunits. Substrates initially bind to the TatABC complex, which probably triggers association of the separate TatA complex to form the active translocon.

Its subcellular location is the cell inner membrane. In terms of biological role, part of the twin-arginine translocation (Tat) system that transports large folded proteins containing a characteristic twin-arginine motif in their signal peptide across membranes. Together with TatC, TatB is part of a receptor directly interacting with Tat signal peptides. TatB may form an oligomeric binding site that transiently accommodates folded Tat precursor proteins before their translocation. The polypeptide is Sec-independent protein translocase protein TatB (Nitrobacter hamburgensis (strain DSM 10229 / NCIMB 13809 / X14)).